The sequence spans 127 residues: Fluoride-specific ion channel FluC (127 aa).

The next 4 helical transmembrane spans lie at 3–23 (LVFLWAALGGALGSSLRYFVG), 38–58 (LGTFSVNLIGCFVIGLMGHLA), 67–87 (FGIFFVTGVLGGFTTFSSYGL), and 102–122 (ISYVLGTNILGLIGVAIGWFL). Na(+)-binding residues include glycine 77 and threonine 80.

It belongs to the fluoride channel Fluc/FEX (TC 1.A.43) family.

The protein localises to the cell inner membrane. The enzyme catalyses fluoride(in) = fluoride(out). Na(+) is not transported, but it plays an essential structural role and its presence is essential for fluoride channel function. Its function is as follows. Fluoride-specific ion channel. Important for reducing fluoride concentration in the cell, thus reducing its toxicity. In Helicobacter acinonychis (strain Sheeba), this protein is Fluoride-specific ion channel FluC.